Consider the following 88-residue polypeptide: Putative membrane protein insertion efficiency factor (88 aa).

This sequence belongs to the UPF0161 family.

Its subcellular location is the cell inner membrane. Its function is as follows. Could be involved in insertion of integral membrane proteins into the membrane. The sequence is that of Putative membrane protein insertion efficiency factor from Coxiella burnetii (strain Dugway 5J108-111).